A 237-amino-acid polypeptide reads, in one-letter code: Bax inhibitor 1 (237 aa).

Residues 1–29 (MNIFDRKINFDALLKFSHITPSTQQHLKK) lie on the Cytoplasmic side of the membrane. Residue Lys-7 forms a Glycyl lysine isopeptide (Lys-Gly) (interchain with G-Cter in ubiquitin) linkage. A helical transmembrane segment spans residues 30 to 50 (VYASFALCMFVAAAGAYVHMV). Over 51–52 (TH) the chain is Lumenal. The chain crosses the membrane as a helical span at residues 53-73 (FIQAGLLSALGSLILMIWLMA). At 74–86 (TPHSHETEQKRLG) the chain is on the cytoplasmic side. A helical transmembrane segment spans residues 87 to 107 (LLAGFAFLTGVGLGPALEFCI). Residues 108–112 (AVNPS) lie on the Lumenal side of the membrane. Residues 113–133 (ILPTAFMGTAMIFTCFTLSAL) form a helical membrane-spanning segment. At 134–139 (YARRRS) the chain is on the cytoplasmic side. Residues 140-160 (YLFLGGILMSALSLLLLSSLG) form a helical membrane-spanning segment. Over 161-166 (NVFFGS) the chain is Lumenal. A helical transmembrane segment spans residues 167-187 (IWLFQANLYVGLVVMCGFVLF). The Cytoplasmic segment spans residues 188 to 206 (DTQLIIEKAEHGDQDYIWH). Residues 207-227 (CIDLFLDFITVFRKLMMILAM) constitute an intramembrane region (helical). Topologically, residues 228 to 237 (NEKDKKKEKK) are cytoplasmic.

It belongs to the BI1 family. In terms of assembly, interacts with BCL2 and BCL2L1. Interacts with ERN1. Ubiquitinated by BFAR, leading to proteasomal degradation. As to expression, highly abundant in testis.

The protein localises to the endoplasmic reticulum membrane. Functionally, endoplasmic reticulum (ER)-resident protein that confers cellular protection as an anti-apoptotic protein by limiting multiple stress-inducing pathways surrounding the endoplasmic reticulum and mitochondria. Inhibits the activities of the key sensor for the endoplasmic reticulum unfolded protein response IRE1alpha/ERN1 both directly and by blocking BAX/BAK binding. Modulates ER calcium homeostasis by acting as a calcium-leak channel. Negatively regulates autophagy and autophagosome formation, especially during periods of nutrient deprivation, and reduces cell survival during starvation. The protein is Bax inhibitor 1 (TMBIM6) of Homo sapiens (Human).